The following is a 262-amino-acid chain: tRNA pseudouridine synthase A (262 aa).

Aspartate 51 (nucleophile) is an active-site residue. Tyrosine 106 lines the substrate pocket.

Belongs to the tRNA pseudouridine synthase TruA family.

The enzyme catalyses uridine(38/39/40) in tRNA = pseudouridine(38/39/40) in tRNA. Functionally, formation of pseudouridine at positions 38, 39 and 40 in the anticodon stem and loop of transfer RNAs. This chain is tRNA pseudouridine synthase A, found in Pyrococcus horikoshii (strain ATCC 700860 / DSM 12428 / JCM 9974 / NBRC 100139 / OT-3).